The chain runs to 92 residues: UPF0213 protein H16_B0156 (92 aa).

The GIY-YIG domain occupies 5–80; that stretch reads SAWYLYLLEC…KRLSSTQKRA (76 aa).

It belongs to the UPF0213 family.

The chain is UPF0213 protein H16_B0156 from Cupriavidus necator (strain ATCC 17699 / DSM 428 / KCTC 22496 / NCIMB 10442 / H16 / Stanier 337) (Ralstonia eutropha).